Reading from the N-terminus, the 242-residue chain is Small ribosomal subunit protein uS2 (242 aa).

The protein belongs to the universal ribosomal protein uS2 family.

This is Small ribosomal subunit protein uS2 from Tolumonas auensis (strain DSM 9187 / NBRC 110442 / TA 4).